Here is a 323-residue protein sequence, read N- to C-terminus: o-succinylbenzoate synthase (323 aa).

Residue Lys134 is the Proton donor of the active site. Positions 162, 191, and 214 each coordinate Mg(2+). The Proton acceptor role is filled by Lys236.

It belongs to the mandelate racemase/muconate lactonizing enzyme family. MenC type 1 subfamily. The cofactor is a divalent metal cation.

It catalyses the reaction (1R,6R)-6-hydroxy-2-succinyl-cyclohexa-2,4-diene-1-carboxylate = 2-succinylbenzoate + H2O. It participates in quinol/quinone metabolism; 1,4-dihydroxy-2-naphthoate biosynthesis; 1,4-dihydroxy-2-naphthoate from chorismate: step 4/7. Its pathway is quinol/quinone metabolism; menaquinone biosynthesis. Its function is as follows. Converts 2-succinyl-6-hydroxy-2,4-cyclohexadiene-1-carboxylate (SHCHC) to 2-succinylbenzoate (OSB). This Yersinia pestis bv. Antiqua (strain Antiqua) protein is o-succinylbenzoate synthase.